Consider the following 342-residue polypeptide: Mitogen-activated protein kinase kinase kinase 20 (342 aa).

In terms of domain architecture, Protein kinase spans 3–268; sequence WVRGETIGFG…AEMLLNHSFV (266 aa). 9 to 17 serves as a coordination point for ATP; sequence IGFGTFSTV. The residue at position 18 (S18) is a Phosphoserine. Residue T19 is modified to Phosphothreonine. An ATP-binding site is contributed by K36. Phosphotyrosine occurs at positions 41 and 66. A phosphoserine mark is found at S93 and S114. D131 functions as the Proton acceptor in the catalytic mechanism. The required for MKK3 binding stretch occupies residues 285–342; the sequence is KDEDKVLMSPKCPFEFDDWDSFTLDSNPSFDSPVERLGSLVSGSIPDWSVGGSWLTVR.

This sequence belongs to the protein kinase superfamily. Ser/Thr protein kinase family. Interacts with MKK3 and MPK18 via its C-terminal domain. Binds to MKK5. Autophosphorylates; active in phosphorylated state. Dephosphorylated by ABI1. As to expression, expressed in roots, seedlings, leaves, flower buds, flowers and siliques.

The protein localises to the nucleus. It is found in the cytoplasm. It catalyses the reaction L-seryl-[protein] + ATP = O-phospho-L-seryl-[protein] + ADP + H(+). It carries out the reaction L-threonyl-[protein] + ATP = O-phospho-L-threonyl-[protein] + ADP + H(+). Its activity is regulated as follows. Activated through serine, threonine and tyrosine phosphorylation, especially upon abscisic acid (ABA) treatment. Restricted activity by ABI1-mediated dephosphorylation. Mitogen-activated protein kinase kinase (MAPKK) that phosphorylates both MKK3 and MPK18 and regulate two separate signaling pathways involved in root microtubule functions. MAPKK which regulates abscisic acid (ABA) responses in a MAPKKK20-MKK5-MPK6 cascade involved in root growth (e.g. root cell division and elongation) and stomatal response, probably via MKK5 activation by protein phosphorylation and subsequent activation of MAPK6 by MKK5. Involved in various abiotic stresses (e.g. osmotic stress, cold and hydrogen peroxide) responses by phosphorylating and thus regulating MPK6 activity, in an ABA-independent manner. This Arabidopsis thaliana (Mouse-ear cress) protein is Mitogen-activated protein kinase kinase kinase 20.